A 143-amino-acid chain; its full sequence is Large ribosomal subunit protein uL15 (143 aa).

A disordered region spans residues 20–52 (GRGIGSGKGKTAGRGHKGQHSRAGGYHKVGFEG). A compositionally biased stretch (basic residues) spans 30–39 (TAGRGHKGQH).

Belongs to the universal ribosomal protein uL15 family. Part of the 50S ribosomal subunit.

Its function is as follows. Binds to the 23S rRNA. This chain is Large ribosomal subunit protein uL15, found in Coxiella burnetii (strain CbuG_Q212) (Coxiella burnetii (strain Q212)).